The primary structure comprises 355 residues: Sesquiterpene synthase-like protein Agr11 (355 aa).

This sequence belongs to the terpene synthase family.

In Cyclocybe aegerita (Black poplar mushroom), this protein is Sesquiterpene synthase-like protein Agr11.